The chain runs to 429 residues: Histidine--tRNA ligase (429 aa).

This sequence belongs to the class-II aminoacyl-tRNA synthetase family. As to quaternary structure, homodimer.

It is found in the cytoplasm. The catalysed reaction is tRNA(His) + L-histidine + ATP = L-histidyl-tRNA(His) + AMP + diphosphate + H(+). In Oceanobacillus iheyensis (strain DSM 14371 / CIP 107618 / JCM 11309 / KCTC 3954 / HTE831), this protein is Histidine--tRNA ligase.